Here is a 485-residue protein sequence, read N- to C-terminus: Protein disulfide-isomerase 1 (485 aa).

The N-terminal stretch at 1–20 (MSLSVSFIFLLVASIGAVVA) is a signal peptide. Thioredoxin domains are found at residues 21–130 (DSEN…KKSG) and 342–470 (YLEG…KYAG). 2 disulfides stabilise this stretch: Cys-52–Cys-55 and Cys-393–Cys-396. Residues Cys-393 and Cys-396 each act as nucleophile in the active site. A Prevents secretion from ER motif is present at residues 482–485 (HEEL).

The protein belongs to the protein disulfide isomerase family.

The protein resides in the endoplasmic reticulum lumen. The enzyme catalyses Catalyzes the rearrangement of -S-S- bonds in proteins.. This Caenorhabditis elegans protein is Protein disulfide-isomerase 1 (pdi-1).